Reading from the N-terminus, the 608-residue chain is Centromere DNA-binding protein complex CBF3 subunit B (608 aa).

The zn(2)-C6 fungal-type DNA-binding region spans 14-42 (CSVCTRRKVKCDRMIPCGNCRKRGQDSEC). Residue serine 575 is modified to Phosphoserine.

In terms of assembly, component of the CBF3 copmplex, which is formed of CBF3A/CBF2, CBF3B/CEP3, CBF3C/CTF13 and CBF3D.

It is found in the nucleus. It localises to the chromosome. The protein resides in the centromere. Functionally, acts as a component of the centromere DNA-binding protein complex CBF3, which is essential for chromosome segregation and movement of centromeres along microtubules. CBF3 is required for the recruitment of other kinetochore complexes to CEN DNA. It plays a role in the attachment of chromosomes to the spindle and binds selectively to a highly conserved DNA sequence called CDEIII, found in centromers and in several promoters. The protein is Centromere DNA-binding protein complex CBF3 subunit B (CEP3) of Saccharomyces cerevisiae (strain ATCC 204508 / S288c) (Baker's yeast).